Reading from the N-terminus, the 61-residue chain is Large ribosomal subunit protein uL30 (61 aa).

This sequence belongs to the universal ribosomal protein uL30 family. Part of the 50S ribosomal subunit.

This is Large ribosomal subunit protein uL30 from Corynebacterium glutamicum (strain ATCC 13032 / DSM 20300 / JCM 1318 / BCRC 11384 / CCUG 27702 / LMG 3730 / NBRC 12168 / NCIMB 10025 / NRRL B-2784 / 534).